The sequence spans 141 residues: MVDMDRISISLPTNLLAEFDEIIEERGYASRSEAIRDSIRDYLIKHKWIHSLEGERAGTISIIYDHHSTDVMEKLTNIQHDYEKLIVATIHMHLDHDHCMEVVLVKGDAGEIKELTDKLTSQKGVKQVKLTVMVPGGNIPQ.

H80, H91, H93, and C99 together coordinate Ni(2+).

The protein belongs to the transcriptional regulatory CopG/NikR family. The cofactor is Ni(2+).

In terms of biological role, transcriptional regulator. This is Putative nickel-responsive regulator from Methanococcus maripaludis (strain DSM 14266 / JCM 13030 / NBRC 101832 / S2 / LL).